The chain runs to 394 residues: 12-oxophytodienoate reductase 7 (394 aa).

FMN contacts are provided by residues 35-37 and Q110; that span reads PMT. 189-192 serves as a coordination point for substrate; that stretch reads HGAH. Catalysis depends on Y194, which acts as the Proton donor. R241 contacts FMN. R286 lines the substrate pocket. Residues G324 and 345–346 contribute to the FMN site; that span reads GR. A Microbody targeting signal motif is present at residues 392–394; sequence SRM.

It belongs to the NADH:flavin oxidoreductase/NADH oxidase family. The cofactor is FMN.

The protein localises to the peroxisome. The enzyme catalyses (1S,2S)-OPC-8 + NADP(+) = (9S,13S,15Z)-12-oxophyto-10,15-dienoate + NADPH + H(+). It participates in lipid metabolism; oxylipin biosynthesis. Its function is as follows. Involved in the biosynthesis of jasmonate (JA) and perhaps in biosynthesis or metabolism of other oxylipin signaling moleclules. In vitro, reduces cis(+)-12-oxophytodienoic acid (cis(+)-OPDA) and cis(-)-OPDA to cis(+)-OPC-8:0 and cis(-)-OPC-8:0, respectively. May be required for the spatial and temporal regulation of JA levels during dehiscence of anthers, promoting the stomium degeneration program. Involved in carbohydrate transport underlying normal lodicule function during anthesis. This Oryza sativa subsp. japonica (Rice) protein is 12-oxophytodienoate reductase 7.